A 212-amino-acid polypeptide reads, in one-letter code: Pyridoxine/pyridoxamine 5'-phosphate oxidase (212 aa).

Residues 59–64, 74–75, K81, and Q103 contribute to the FMN site; these read RMVLMK and YS. Residue K64 coordinates substrate. Substrate is bound by residues Y121 and R125. Residues 138-139 and W183 each bind FMN; that span reads QS. Position 189 to 191 (189 to 191) interacts with substrate; that stretch reads RLH. Residue R193 coordinates FMN.

The protein belongs to the pyridoxamine 5'-phosphate oxidase family. In terms of assembly, homodimer. It depends on FMN as a cofactor.

The enzyme catalyses pyridoxamine 5'-phosphate + O2 + H2O = pyridoxal 5'-phosphate + H2O2 + NH4(+). It carries out the reaction pyridoxine 5'-phosphate + O2 = pyridoxal 5'-phosphate + H2O2. It participates in cofactor metabolism; pyridoxal 5'-phosphate salvage; pyridoxal 5'-phosphate from pyridoxamine 5'-phosphate: step 1/1. Its pathway is cofactor metabolism; pyridoxal 5'-phosphate salvage; pyridoxal 5'-phosphate from pyridoxine 5'-phosphate: step 1/1. In terms of biological role, catalyzes the oxidation of either pyridoxine 5'-phosphate (PNP) or pyridoxamine 5'-phosphate (PMP) into pyridoxal 5'-phosphate (PLP). The polypeptide is Pyridoxine/pyridoxamine 5'-phosphate oxidase (Rhodopseudomonas palustris (strain TIE-1)).